Here is an 800-residue protein sequence, read N- to C-terminus: Putative antiporter subunit mnhA2 (800 aa).

20 helical membrane passes run 1–21 (MSLVYLLIAILVIMAMILLMS), 33–53 (IALVAPVISSIYFLIQIPSVA), 78–98 (GLSLMFSLIISLIGIAVFFYA), 118–138 (LFMFSMIGIVLSDNTILMYIF), 167–187 (FMITVFGGLALLVGFIMLYIM), 207–227 (GLFIPMIFMFLLGAFTKSAQF), 241–261 (TPVSAYLHSATMVKAGIFLLL), 273–293 (YVYIVTFVGLITMLFGSITAL), 300–320 (GILAYSTISQLGMIMAMVGIG), 331–351 (IASIYVFVLFGALFHLMNHAI), 387–407 (LVMTIAALSMAGVPFLNGFLS), 424–444 (FSLISMIAIVFVGVIASVFTF), 472–492 (PWLFSLPSLILMVLVPVIFFV), 527–547 (GFNIPLLLTIIIILLGSVLAI), 595–615 (IIMTLGIFMIIIGYGYIRIGL), 627–647 (GALEIILAIVTVTIGISLIFI), 651–671 (LTMVILNGVIGFVVTLFFIAM), 676–696 (LALTQLVVETITTILFIVSFS), 712–732 (IIKISVSLLMALIVVSLIFIT), and 768–788 (LDTLFEGLVLIITGLGIYTLL).

This sequence belongs to the CPA3 antiporters (TC 2.A.63) subunit A family. May form a heterooligomeric complex that consists of seven subunits: mnhA2, mnhB2, mnhC2, mnhD2, mnhE2, mnhF2 and mnhG2.

The protein resides in the cell membrane. The protein is Putative antiporter subunit mnhA2 (mnhA2) of Staphylococcus aureus (strain MSSA476).